The primary structure comprises 795 residues: Protocadherin beta-12 (795 aa).

An N-terminal signal peptide occupies residues 1 to 26 (MENGGAGTLQIRQVLLFFVLLGMSQA). Residues 27 to 690 (GSETGNFLVM…AQADSLTVYL (664 aa)) are Extracellular-facing. Cadherin domains lie at 35-133 (VMEE…SPVF), 138-242 (MLLE…SPEF), 247-347 (YEVK…APEI), 352-451 (ITSP…APAF), and 456-561 (YALF…SPFV). 4 N-linked (GlcNAc...) asparagine glycosylation sites follow: asparagine 418, asparagine 436, asparagine 487, and asparagine 567. One can recognise a Cadherin 6 domain in the interval 568–671 (GSAPCTELVP…LVDGFSQPYL (104 aa)). A helical membrane pass occupies residues 691-711 (VVALASVSSLFLFSVLLFVAV). The Cytoplasmic segment spans residues 712–795 (RLCRRSRAAP…NPPFQNNLGF (84 aa)).

The protein resides in the cell membrane. Functionally, potential calcium-dependent cell-adhesion protein. May be involved in the establishment and maintenance of specific neuronal connections in the brain. This is Protocadherin beta-12 (PCDHB12) from Homo sapiens (Human).